A 193-amino-acid polypeptide reads, in one-letter code: Phosphoheptose isomerase (193 aa).

The SIS domain occupies 37–193 (LADSFKAGGK…QLIEKEMVKA (157 aa)). A substrate-binding site is contributed by 52-54 (NGG). Zn(2+) contacts are provided by histidine 61 and glutamate 65. Substrate contacts are provided by residues glutamate 65, 93–94 (ND), 119–121 (STS), serine 124, and glutamine 172. 2 residues coordinate Zn(2+): glutamine 172 and histidine 180.

It belongs to the SIS family. GmhA subfamily. In terms of assembly, homotetramer. Zn(2+) serves as cofactor.

Its subcellular location is the cytoplasm. It carries out the reaction 2 D-sedoheptulose 7-phosphate = D-glycero-alpha-D-manno-heptose 7-phosphate + D-glycero-beta-D-manno-heptose 7-phosphate. The protein operates within carbohydrate biosynthesis; D-glycero-D-manno-heptose 7-phosphate biosynthesis; D-glycero-alpha-D-manno-heptose 7-phosphate and D-glycero-beta-D-manno-heptose 7-phosphate from sedoheptulose 7-phosphate: step 1/1. It participates in bacterial outer membrane biogenesis; LPS core biosynthesis. In terms of biological role, catalyzes the isomerization of sedoheptulose 7-phosphate in D-glycero-D-manno-heptose 7-phosphate. The chain is Phosphoheptose isomerase from Yersinia pestis.